A 173-amino-acid chain; its full sequence is Ribosome maturation factor RimP (173 aa).

This sequence belongs to the RimP family.

Its subcellular location is the cytoplasm. Its function is as follows. Required for maturation of 30S ribosomal subunits. The protein is Ribosome maturation factor RimP of Chlorobium phaeobacteroides (strain DSM 266 / SMG 266 / 2430).